The primary structure comprises 260 residues: Proteasome subunit alpha (260 aa).

Positions 231 to 260 (LLPEDFSPGQTEGGGDPAPESGDSKDAKDN) are disordered.

It belongs to the peptidase T1A family. The 20S proteasome core is composed of 14 alpha and 14 beta subunits that assemble into four stacked heptameric rings, resulting in a barrel-shaped structure. The two inner rings, each composed of seven catalytic beta subunits, are sandwiched by two outer rings, each composed of seven alpha subunits. The catalytic chamber with the active sites is on the inside of the barrel. Has a gated structure, the ends of the cylinder being occluded by the N-termini of the alpha-subunits. Is capped by the proteasome-associated ATPase, ARC.

It localises to the cytoplasm. Its pathway is protein degradation; proteasomal Pup-dependent pathway. The formation of the proteasomal ATPase ARC-20S proteasome complex, likely via the docking of the C-termini of ARC into the intersubunit pockets in the alpha-rings, may trigger opening of the gate for substrate entry. Interconversion between the open-gate and close-gate conformations leads to a dynamic regulation of the 20S proteasome proteolysis activity. Its function is as follows. Component of the proteasome core, a large protease complex with broad specificity involved in protein degradation. This chain is Proteasome subunit alpha, found in Mycobacteroides abscessus (strain ATCC 19977 / DSM 44196 / CCUG 20993 / CIP 104536 / JCM 13569 / NCTC 13031 / TMC 1543 / L948) (Mycobacterium abscessus).